Consider the following 220-residue polypeptide: uncharacterized protein (220 aa).

This is an uncharacterized protein from Mycoplasma pneumoniae (strain ATCC 29342 / M129 / Subtype 1) (Mycoplasmoides pneumoniae).